A 222-amino-acid chain; its full sequence is Dual specificity phosphatase 29 (222 aa).

The 149-residue stretch at His54–Gln202 folds into the Tyrosine-protein phosphatase domain. Substrate is bound at residue His146–Arg153. The Phosphocysteine intermediate role is filled by Cys147. Residues Val201–Pro222 are disordered. Over residues His209–Pro222 the composition is skewed to basic and acidic residues.

The protein belongs to the protein-tyrosine phosphatase family. Non-receptor class dual specificity subfamily. As to quaternary structure, homodimer. Interacts with PRKAA2.

It localises to the cytoplasm. Its subcellular location is the nucleus. The catalysed reaction is O-phospho-L-tyrosyl-[protein] + H2O = L-tyrosyl-[protein] + phosphate. It catalyses the reaction O-phospho-L-seryl-[protein] + H2O = L-seryl-[protein] + phosphate. It carries out the reaction O-phospho-L-threonyl-[protein] + H2O = L-threonyl-[protein] + phosphate. Its function is as follows. Dual specificity phosphatase able to dephosphorylate phosphotyrosine, phosphoserine and phosphothreonine residues within the same substrate, with a preference for phosphotyrosine as a substrate. Involved in the modulation of intracellular signaling cascades. In skeletal muscle regulates systemic glucose homeostasis by activating, AMPK, an energy sensor protein kinase. Affects MAP kinase signaling though modulation of the MAPK1/2 cascade in skeletal muscle promoting muscle cell differentiation, development and atrophy. This chain is Dual specificity phosphatase 29 (DUSP29), found in Sus scrofa (Pig).